Here is a 122-residue protein sequence, read N- to C-terminus: Small ribosomal subunit protein uS12c (122 aa).

Belongs to the universal ribosomal protein uS12 family. In terms of assembly, part of the 30S ribosomal subunit.

It localises to the plastid. The protein resides in the chloroplast. With S4 and S5 plays an important role in translational accuracy. Located at the interface of the 30S and 50S subunits. In Mesostigma viride (Green alga), this protein is Small ribosomal subunit protein uS12c (rps12).